Here is a 343-residue protein sequence, read N- to C-terminus: Cytoplasmic tRNA 2-thiolation protein 1 (343 aa).

This sequence belongs to the TtcA family. CTU1/NCS6/ATPBD3 subfamily.

It is found in the cytoplasm. Its pathway is tRNA modification; 5-methoxycarbonylmethyl-2-thiouridine-tRNA biosynthesis. In terms of biological role, plays a central role in 2-thiolation of mcm(5)S(2)U at tRNA wobble positions of tRNA(Lys), tRNA(Glu) and tRNA(Gln). Directly binds tRNAs and probably acts by catalyzing adenylation of tRNAs, an intermediate required for 2-thiolation. It is unclear whether it acts as a sulfurtransferase that transfers sulfur from thiocarboxylated URM1 onto the uridine of tRNAs at wobble position. In Drosophila melanogaster (Fruit fly), this protein is Cytoplasmic tRNA 2-thiolation protein 1.